A 183-amino-acid chain; its full sequence is Putative 3-methyladenine DNA glycosylase (183 aa).

It belongs to the DNA glycosylase MPG family.

This Legionella pneumophila (strain Lens) protein is Putative 3-methyladenine DNA glycosylase.